The sequence spans 111 residues: Cell division protein FtsB (111 aa).

At 1–3 (MRL) the chain is on the cytoplasmic side. Residues 4–21 (ITLFLLLLLLAIQYPLWL) traverse the membrane as a helical segment. The Periplasmic segment spans residues 22–111 (GKGGWLRVWD…PAALQPNHRH (90 aa)). Residues 28-64 (RVWDMQKQVASQNQRNAELKQRNLKLEGEVKDLKEGT) adopt a coiled-coil conformation. The disordered stretch occupies residues 90 to 111 (PAPKTSETPLPPPAALQPNHRH).

Belongs to the FtsB family. Part of a complex composed of FtsB, FtsL and FtsQ.

The protein localises to the cell inner membrane. In terms of biological role, essential cell division protein. May link together the upstream cell division proteins, which are predominantly cytoplasmic, with the downstream cell division proteins, which are predominantly periplasmic. The polypeptide is Cell division protein FtsB (Ralstonia nicotianae (strain ATCC BAA-1114 / GMI1000) (Ralstonia solanacearum)).